Reading from the N-terminus, the 317-residue chain is Curved DNA-binding protein (317 aa).

Positions 5-69 constitute a J domain; the sequence is DYYKILGVEP…QKRAEFDEIR (65 aa).

It localises to the cytoplasm. The protein resides in the nucleoid. Functionally, DNA-binding protein that preferentially recognizes a curved DNA sequence. It is probably a functional analog of DnaJ; displays overlapping activities with DnaJ, but functions under different conditions, probably acting as a molecular chaperone in an adaptive response to environmental stresses other than heat shock. Lacks autonomous chaperone activity; binds native substrates and targets them for recognition by DnaK. Its activity is inhibited by the binding of CbpM. The sequence is that of Curved DNA-binding protein from Pseudomonas putida (strain W619).